The primary structure comprises 225 residues: MAAEFNNDWDDLLKDEFEKEYYLNLRKFLIDEYKTQKIHPSMYDIFNALKFTPYKDVKVVILGQDPYHGPNQAHGFSFSVKPGVQTPPSLRNMFKELNSDLGCYIPNNGFLESWAKQGILLLNTVLTVREGQANSHKGKGWEIFTDRVIELLNKREEPIVFILWGRNAISKETLITNPIHKIIKSVHPSPLSATRGFFGSKPFSKTNDFLVSINKEPIDWQIPNI.

Asp-65 serves as the catalytic Proton acceptor.

This sequence belongs to the uracil-DNA glycosylase (UDG) superfamily. UNG family.

Its subcellular location is the cytoplasm. It carries out the reaction Hydrolyzes single-stranded DNA or mismatched double-stranded DNA and polynucleotides, releasing free uracil.. In terms of biological role, excises uracil residues from the DNA which can arise as a result of misincorporation of dUMP residues by DNA polymerase or due to deamination of cytosine. The sequence is that of Uracil-DNA glycosylase from Clostridium perfringens (strain SM101 / Type A).